We begin with the raw amino-acid sequence, 387 residues long: Phosphoglycerate kinase (387 aa).

Substrate-binding positions include 21 to 23, Arg-36, 59 to 62, Arg-113, and Arg-146; these read DLN and HLGR. Residues Lys-197, Glu-314, and 340–343 each bind ATP; that span reads GGDT.

The protein belongs to the phosphoglycerate kinase family. Monomer.

It is found in the cytoplasm. The enzyme catalyses (2R)-3-phosphoglycerate + ATP = (2R)-3-phospho-glyceroyl phosphate + ADP. Its pathway is carbohydrate degradation; glycolysis; pyruvate from D-glyceraldehyde 3-phosphate: step 2/5. This Pseudomonas putida (strain ATCC 700007 / DSM 6899 / JCM 31910 / BCRC 17059 / LMG 24140 / F1) protein is Phosphoglycerate kinase.